We begin with the raw amino-acid sequence, 305 residues long: UDP-N-acetylenolpyruvoylglucosamine reductase 2 (305 aa).

Residues 33 to 197 (VGGKADVFVA…LEARFELEEG (165 aa)) form the FAD-binding PCMH-type domain. Residue Arg176 is part of the active site. Ser226 (proton donor) is an active-site residue. Glu296 is an active-site residue.

The protein belongs to the MurB family. FAD is required as a cofactor.

Its subcellular location is the cytoplasm. The enzyme catalyses UDP-N-acetyl-alpha-D-muramate + NADP(+) = UDP-N-acetyl-3-O-(1-carboxyvinyl)-alpha-D-glucosamine + NADPH + H(+). It participates in cell wall biogenesis; peptidoglycan biosynthesis. Its function is as follows. Cell wall formation. The polypeptide is UDP-N-acetylenolpyruvoylglucosamine reductase 2 (Bacillus thuringiensis subsp. konkukian (strain 97-27)).